Reading from the N-terminus, the 146-residue chain is Meiotically up-regulated gene 151 protein (146 aa).

The tract at residues 1–40 (MSLVAYDSEEEEQTSLVNENNDIKGRSEEPHWKIPNSPKA) is disordered. Over residues 21–32 (NDIKGRSEEPHW) the composition is skewed to basic and acidic residues.

The protein resides in the nucleus. Has a role in meiosis. The chain is Meiotically up-regulated gene 151 protein (mug151) from Schizosaccharomyces pombe (strain 972 / ATCC 24843) (Fission yeast).